Reading from the N-terminus, the 769-residue chain is Multiple C2 domain and transmembrane region protein 5 (769 aa).

C2 domains are found at residues S23–Y143, P184–F305, and Y345–Y467. D56, D62, D109, D111, and D116 together coordinate Ca(2+). The next 2 helical transmembrane spans lie at I604–I624 and L712–V732.

This sequence belongs to the MCTP family. Ca(2+) is required as a cofactor. As to expression, highly expressed in roots meristems and shoot apical meristems (SAMs). Observed in flowers.

Its subcellular location is the endoplasmic reticulum membrane. Functionally, may function as a signaling molecule by regulating the trafficking of other regulators. This is Multiple C2 domain and transmembrane region protein 5 from Arabidopsis thaliana (Mouse-ear cress).